The sequence spans 155 residues: Ribosomal RNA large subunit methyltransferase H (155 aa).

S-adenosyl-L-methionine is bound by residues leucine 73, glycine 104, and 123 to 128; that span reads LSPLTL.

It belongs to the RNA methyltransferase RlmH family. In terms of assembly, homodimer.

The protein resides in the cytoplasm. It catalyses the reaction pseudouridine(1915) in 23S rRNA + S-adenosyl-L-methionine = N(3)-methylpseudouridine(1915) in 23S rRNA + S-adenosyl-L-homocysteine + H(+). Specifically methylates the pseudouridine at position 1915 (m3Psi1915) in 23S rRNA. This Pseudomonas savastanoi pv. phaseolicola (strain 1448A / Race 6) (Pseudomonas syringae pv. phaseolicola (strain 1448A / Race 6)) protein is Ribosomal RNA large subunit methyltransferase H.